A 428-amino-acid chain; its full sequence is Ribosome biogenesis protein WDR12 homolog (428 aa).

Residues 13–97 form a ubiquitin-like (UBL) domain region; sequence LQVHFTTKQK…EDTIELEYVE (85 aa). WD repeat units lie at residues 109–146, 148–190, 197–236, 259–297, 299–338, 344–384, and 388–426; these read LHDD…KLTI, GHVA…NTAE, GHER…DKGE, GHRE…IKTE, TGNK…GNFV, GHSQ…APIF, and GHED…DNTK.

Belongs to the WD repeat WDR12/YTM1 family.

The protein resides in the nucleus. It is found in the nucleolus. Its subcellular location is the nucleoplasm. Required for maturation of ribosomal RNAs and formation of the large ribosomal subunit. This chain is Ribosome biogenesis protein WDR12 homolog, found in Anopheles gambiae (African malaria mosquito).